We begin with the raw amino-acid sequence, 266 residues long: MAKMTTLKMKERLEKELNKPNRQFAYERDSDTLSVTQNGKKVTLAIPQIIANYENDGEAAIEKIIYYVEEGFLAASGNIELKNNTANIYPVVRATSFPDTTKAGEVLLTDEHTAETKIFYAFDLGKSYRFIEKNMLEKEGLSHEEVRKAAFDNLGKLEIPLKKDSVNGNDFYFVRTNDGYDASRLLNVSFLQQMREKLTGEMVLAVPHQDVLIIGAIKDNTGYDVLAHMTMDFFADGLVPITSLPFVYNNGKLEPIFIMAKNRLKE.

This sequence belongs to the UPF0354 family.

This is UPF0354 protein lin1649 from Listeria innocua serovar 6a (strain ATCC BAA-680 / CLIP 11262).